An 831-amino-acid chain; its full sequence is Multiphosphoryl transfer protein (831 aa).

The HPr domain occupies 1-90; the sequence is MLTIQFLCPL…EYIQVRFIDS (90 aa). The active-site Pros-phosphohistidine intermediate; for HPr activity is the His-15. Phosphohistidine; by EI is present on His-15. A PTS EI region spans residues 119–650; it reads GNVLASGVGV…AVKSQLRQLD (532 aa). The Tele-phosphohistidine intermediate; for PTS EI activity role is filled by His-298. A Phosphohistidine; by autocatalysis modification is found at His-298. Phosphoenolpyruvate-binding residues include Arg-405 and Arg-441. Positions 540 and 564 each coordinate Mg(2+). Residues 563 to 564 and Arg-574 contribute to the phosphoenolpyruvate site; that span reads ND. The Proton donor; for EI activity role is filled by Cys-611. The 144-residue stretch at 685-828 folds into the PTS EIIA type-2 domain; that stretch reads PLLALENIFV…QSILTLLETE (144 aa). Catalysis depends on His-747, which acts as the Tele-phosphohistidine intermediate; for PTS EIIA activity. Position 747 is a phosphohistidine; by HPr (His-747).

Belongs to the PEP-utilizing enzyme family. Requires Mg(2+) as cofactor.

The protein resides in the cytoplasm. It catalyses the reaction L-histidyl-[protein] + phosphoenolpyruvate = N(pros)-phospho-L-histidyl-[protein] + pyruvate. The enzyme catalyses D-fructose(out) + N(pros)-phospho-L-histidyl-[protein] = D-fructose 1-phosphate(in) + L-histidyl-[protein]. Multifunctional protein that includes general (non sugar-specific) and sugar-specific components of the phosphoenolpyruvate-dependent sugar phosphotransferase system (sugar PTS). This major carbohydrate active transport system catalyzes the phosphorylation of incoming sugar substrates concomitantly with their translocation across the cell membrane. The enzyme II FryABC PTS system is involved in fructose transport. This is Multiphosphoryl transfer protein (fryA) from Escherichia coli O6:H1 (strain CFT073 / ATCC 700928 / UPEC).